The chain runs to 366 residues: MSHEKSFLVSGDSYPPPNPGYPGGPQPSMAPYPGAPYPQAPFQPSPYGQPGYPQGPSPYPQGGYPQGPYPPGGYPQGPYPPGGYPQGPYPPGGYPQGPYPQSPFPPNPYGQPQAFPAQDPGSPHHGNYHEEGPPSYYDNQDFPATNWDDKSIRQAFIRKVFLVLTLQLSVTLSTVAVFTFVGEVKGFVRENVWTYYVSYAIFFVSLIVLSCCGDFRRKHPWNLVALSILTVSLSYMVGMIASFYNTEAVIMAVGITTTVCFTVVIFSMQTRYDFTSCVGVLLVSVVVLILFAILCIFIRSRVLEIVYASLGALLFTCFLAVDTQLLLGNKQLSLSPEEYVFAALNLYTDIINIFLYILTIIGRAKE.

Residues 1-141 are disordered; sequence MSHEKSFLVS…GPPSYYDNQD (141 aa). Composition is skewed to pro residues over residues 14–44 and 67–109; these read YPPP…PFQP and GPYP…PNPY. A run of 7 helical transmembrane segments spans residues 160–180, 192–212, 223–243, 248–268, 278–298, 302–322, and 341–361; these read VFLV…VFTF, VWTY…LSCC, LVAL…IASF, AVIM…IFSM, VGVL…CIFI, VLEI…LAVD, and FAAL…LTII.

This sequence belongs to the BI1 family. LFG subfamily.

Its subcellular location is the membrane. In terms of biological role, potential apoptotic regulator. This Bos taurus (Bovine) protein is Protein lifeguard 1 (GRINA).